The primary structure comprises 284 residues: tRNA pseudouridine synthase B (284 aa).

Aspartate 40 functions as the Nucleophile in the catalytic mechanism.

This sequence belongs to the pseudouridine synthase TruB family. Type 1 subfamily.

The catalysed reaction is uridine(55) in tRNA = pseudouridine(55) in tRNA. Its function is as follows. Responsible for synthesis of pseudouridine from uracil-55 in the psi GC loop of transfer RNAs. This is tRNA pseudouridine synthase B from Helicobacter hepaticus (strain ATCC 51449 / 3B1).